Here is a 124-residue protein sequence, read N- to C-terminus: Small ribosomal subunit protein bS6 (124 aa).

The interval 98 to 124 (EASPMLKAREERPRREDVREEAEEAAE) is disordered. Positions 104-115 (KAREERPRREDV) are enriched in basic and acidic residues.

The protein belongs to the bacterial ribosomal protein bS6 family.

Binds together with bS18 to 16S ribosomal RNA. The chain is Small ribosomal subunit protein bS6 from Tolumonas auensis (strain DSM 9187 / NBRC 110442 / TA 4).